The primary structure comprises 294 residues: Filamin-B (294 aa).

Filamin repeat units follow at residues 1 to 67 and 71 to 163; these read GTRL…KVRV and GQAG…KAKV. 2 positions are modified to phosphoserine: Ser-61 and Ser-157. Lys-160 is covalently cross-linked (Glycyl lysine isopeptide (Lys-Gly) (interchain with G-Cter in ISG15)). Positions 164-198 are hinge 2; that stretch reads TGQRLVGPGSTNETSSILVESVTRSSTETCYSAIP. The self-association site, tail stretch occupies residues 164 to 294; that stretch reads TGQRLVGPGS…PGSPFHVTVP (131 aa). Phosphoserine occurs at positions 173 and 184. The Filamin 24 repeat unit spans residues 199-293; sequence KASSDASKVT…IPGSPFHVTV (95 aa). N6-succinyllysine occurs at positions 210 and 216. Lys-268 carries the N6-acetyllysine modification.

Belongs to the filamin family. As to quaternary structure, homodimer. Interacts with FLNA, FLNC, INPPL1, ITGB1A, ITGB1D, ITGB3, ITGB6, MYOT, MYOZ1, PSEN1 and PSEN2. Interacts with MICALL2. Interacts with RFLNA and RFLNB. Interacts with HTLV-I viral p13 protein. Interacts with ASB2; the interaction targets FLNB for proteasomal degradation. ISGylation prevents ability to interact with the upstream activators of the JNK cascade and inhibits IFNA-induced JNK signaling. In terms of processing, ubiquitination by a SCF-like complex containing ASB2 leads to proteasomal degradation which promotes muscle differentiation.

It is found in the cytoplasm. It localises to the cell cortex. The protein localises to the cytoskeleton. Its subcellular location is the myofibril. The protein resides in the sarcomere. It is found in the z line. In terms of biological role, connects cell membrane constituents to the actin cytoskeleton. May promote orthogonal branching of actin filaments and links actin filaments to membrane glycoproteins. Anchors various transmembrane proteins to the actin cytoskeleton. In Oryctolagus cuniculus (Rabbit), this protein is Filamin-B (FLNB).